Here is a 141-residue protein sequence, read N- to C-terminus: MSNKKVIKLIKLQIPGGKANPAPPIGPALGAAGVNIMGFCKEFNAATQDRPGDLLPVVITVYSDKTFTFITKQPPVSSLIKKALNLESGSKIPNRNKVGKLTQEQVTAIAEQKMKDMDVVLLESAKRMVEGTARSMGIDVE.

Belongs to the universal ribosomal protein uL11 family. In terms of assembly, part of the ribosomal stalk of the 50S ribosomal subunit. Interacts with L10 and the large rRNA to form the base of the stalk. L10 forms an elongated spine to which L12 dimers bind in a sequential fashion forming a multimeric L10(L12)X complex. One or more lysine residues are methylated.

In terms of biological role, forms part of the ribosomal stalk which helps the ribosome interact with GTP-bound translation factors. This Chlamydia felis (strain Fe/C-56) (Chlamydophila felis) protein is Large ribosomal subunit protein uL11.